Consider the following 130-residue polypeptide: Histone H2A type 2-B (130 aa).

The tract at residues 1 to 22 (MSGRGKQGGKARAKAKSRSSRA) is disordered. Ser2 carries the N-acetylserine modification. Ser2 is subject to Phosphoserine; by RPS6KA5. A Citrulline; alternate modification is found at Arg4. Arg4 carries the symmetric dimethylarginine; by PRMT5; alternate modification. An N6-(2-hydroxyisobutyryl)lysine; alternate mark is found at Lys6 and Lys10. Lys6 carries the post-translational modification N6-(beta-hydroxybutyryl)lysine; alternate. A compositionally biased stretch (basic residues) spans 7–19 (QGGKARAKAKSRS). Position 10 is an N6-lactoyllysine; alternate (Lys10). N6-succinyllysine; alternate is present on Lys10. Glycyl lysine isopeptide (Lys-Gly) (interchain with G-Cter in ubiquitin) cross-links involve residues Lys14 and Lys16. Lys37 is subject to N6-(2-hydroxyisobutyryl)lysine; alternate. The residue at position 37 (Lys37) is an N6-(beta-hydroxybutyryl)lysine; alternate. An N6-crotonyllysine; alternate modification is found at Lys37. N6-(2-hydroxyisobutyryl)lysine is present on residues Lys75 and Lys76. Lys96 bears the N6-(2-hydroxyisobutyryl)lysine; alternate mark. Lys96 is subject to N6-succinyllysine; alternate. At Lys96 the chain carries N6-glutaryllysine; alternate. Residue Gln105 is modified to N5-methylglutamine. An N6-(2-hydroxyisobutyryl)lysine; alternate modification is found at Lys119. An N6-crotonyllysine; alternate mark is found at Lys119 and Lys120. An N6-glutaryllysine; alternate mark is found at Lys119 and Lys120. Lys120 bears the N6-(beta-hydroxybutyryl)lysine; alternate mark. Lys120 participates in a covalent cross-link: Glycyl lysine isopeptide (Lys-Gly) (interchain with G-Cter in ubiquitin); alternate. A Phosphothreonine; by DCAF1 modification is found at Thr121.

The protein belongs to the histone H2A family. The nucleosome is a histone octamer containing two molecules each of H2A, H2B, H3 and H4 assembled in one H3-H4 heterotetramer and two H2A-H2B heterodimers. The octamer wraps approximately 147 bp of DNA. Post-translationally, deiminated on Arg-4 in granulocytes upon calcium entry. Monoubiquitination of Lys-120 (H2AK119Ub) by RING1, TRIM37 and RNF2/RING2 complex gives a specific tag for epigenetic transcriptional repression and participates in X chromosome inactivation of female mammals. It is involved in the initiation of both imprinted and random X inactivation. Ubiquitinated H2A is enriched in inactive X chromosome chromatin. Ubiquitination of H2A functions downstream of methylation of 'Lys-27' of histone H3 (H3K27me). H2AK119Ub by RNF2/RING2 can also be induced by ultraviolet and may be involved in DNA repair. Following DNA double-strand breaks (DSBs), it is ubiquitinated through 'Lys-63' linkage of ubiquitin moieties by the E2 ligase UBE2N and the E3 ligases RNF8 and RNF168, leading to the recruitment of repair proteins to sites of DNA damage. Ubiquitination at Lys-14 and Lys-16 (H2AK13Ub and H2AK15Ub, respectively) in response to DNA damage is initiated by RNF168 that mediates monoubiquitination at these 2 sites, and 'Lys-63'-linked ubiquitin are then conjugated to monoubiquitin; RNF8 is able to extend 'Lys-63'-linked ubiquitin chains in vitro. Deubiquitinated by USP51 at Lys-14 and Lys-16 (H2AK13Ub and H2AK15Ub, respectively) after damaged DNA is repaired. H2AK119Ub and ionizing radiation-induced 'Lys-63'-linked ubiquitination (H2AK13Ub and H2AK15Ub) are distinct events. In terms of processing, phosphorylation on Ser-2 (H2AS1ph) is enhanced during mitosis. Phosphorylation on Ser-2 by RPS6KA5/MSK1 directly represses transcription. Acetylation of H3 inhibits Ser-2 phosphorylation by RPS6KA5/MSK1. Phosphorylation at Thr-121 (H2AT120ph) by DCAF1 is present in the regulatory region of many tumor suppresor genes and down-regulates their transcription. Post-translationally, symmetric dimethylation on Arg-4 by the PRDM1/PRMT5 complex may play a crucial role in the germ-cell lineage. Glutamine methylation at Gln-105 (H2AQ104me) by FBL is specifically dedicated to polymerase I. It is present at 35S ribosomal DNA locus and impairs binding of the FACT complex. In terms of processing, crotonylation (Kcr) is specifically present in male germ cells and marks testis-specific genes in post-meiotic cells, including X-linked genes that escape sex chromosome inactivation in haploid cells. Crotonylation marks active promoters and enhancers and confers resistance to transcriptional repressors. It is also associated with post-meiotically activated genes on autosomes. Post-translationally, hydroxybutyrylation of histones is induced by starvation. Lactylated in macrophages by EP300/P300 by using lactoyl-CoA directly derived from endogenous or exogenous lactate, leading to stimulates gene transcription.

Its subcellular location is the nucleus. The protein resides in the chromosome. Its function is as follows. Core component of nucleosome. Nucleosomes wrap and compact DNA into chromatin, limiting DNA accessibility to the cellular machineries which require DNA as a template. Histones thereby play a central role in transcription regulation, DNA repair, DNA replication and chromosomal stability. DNA accessibility is regulated via a complex set of post-translational modifications of histones, also called histone code, and nucleosome remodeling. This chain is Histone H2A type 2-B, found in Mus musculus (Mouse).